A 235-amino-acid polypeptide reads, in one-letter code: Large ribosomal subunit protein bL25 (235 aa).

Disordered regions lie at residues 1 to 21 and 210 to 235; these read MADN…PARR and APAA…GAKK. Over residues 210–222 the composition is skewed to low complexity; the sequence is APAAGAAPAAGGE. Over residues 223–235 the composition is skewed to basic and acidic residues; sequence AAKKAPEAKGAKK.

Belongs to the bacterial ribosomal protein bL25 family. CTC subfamily. In terms of assembly, part of the 50S ribosomal subunit; part of the 5S rRNA/L5/L18/L25 subcomplex. Contacts the 5S rRNA. Binds to the 5S rRNA independently of L5 and L18.

This is one of the proteins that binds to the 5S RNA in the ribosome where it forms part of the central protuberance. This chain is Large ribosomal subunit protein bL25, found in Anaeromyxobacter sp. (strain Fw109-5).